The chain runs to 135 residues: Large ribosomal subunit protein uL16c (135 aa).

Positions 1–20 are disordered; the sequence is MLSPKRTRFRKQHRGRMKGK.

The protein belongs to the universal ribosomal protein uL16 family. As to quaternary structure, part of the 50S ribosomal subunit.

Its subcellular location is the plastid. It localises to the chloroplast. This is Large ribosomal subunit protein uL16c from Landoltia punctata (Dotted duckmeat).